The following is a 113-amino-acid chain: uncharacterized protein (113 aa).

The tract at residues 78-113 (YCNRGSERTNQGNRGSAPSKILLPRTIADPFRGGPE) is disordered.

This is an uncharacterized protein from Halobacterium phage phiH (Bacteriophage phi-H).